The primary structure comprises 421 residues: UDP-N-acetylglucosamine 1-carboxyvinyltransferase (421 aa).

Residue 22–23 (KN) coordinates phosphoenolpyruvate. R92 contributes to the UDP-N-acetyl-alpha-D-glucosamine binding site. C116 acts as the Proton donor in catalysis. 2-(S-cysteinyl)pyruvic acid O-phosphothioketal is present on C116. D307 and V329 together coordinate UDP-N-acetyl-alpha-D-glucosamine.

The protein belongs to the EPSP synthase family. MurA subfamily.

The protein resides in the cytoplasm. The enzyme catalyses phosphoenolpyruvate + UDP-N-acetyl-alpha-D-glucosamine = UDP-N-acetyl-3-O-(1-carboxyvinyl)-alpha-D-glucosamine + phosphate. It functions in the pathway cell wall biogenesis; peptidoglycan biosynthesis. Cell wall formation. Adds enolpyruvyl to UDP-N-acetylglucosamine. This is UDP-N-acetylglucosamine 1-carboxyvinyltransferase from Kosmotoga olearia (strain ATCC BAA-1733 / DSM 21960 / TBF 19.5.1).